A 213-amino-acid chain; its full sequence is ATP-dependent dethiobiotin synthetase BioD (213 aa).

Residue 13-18 (GIGKTV) coordinates ATP. Residue Thr17 coordinates Mg(2+). Lys33 is an active-site residue. Position 100 (Glu100) interacts with Mg(2+). Residues 100–103 (EGAG) and 184–186 (PRL) contribute to the ATP site.

This sequence belongs to the dethiobiotin synthetase family. Homodimer. Mg(2+) is required as a cofactor.

The protein localises to the cytoplasm. The enzyme catalyses (7R,8S)-7,8-diammoniononanoate + CO2 + ATP = (4R,5S)-dethiobiotin + ADP + phosphate + 3 H(+). It participates in cofactor biosynthesis; biotin biosynthesis; biotin from 7,8-diaminononanoate: step 1/2. Functionally, catalyzes a mechanistically unusual reaction, the ATP-dependent insertion of CO2 between the N7 and N8 nitrogen atoms of 7,8-diaminopelargonic acid (DAPA, also called 7,8-diammoniononanoate) to form a ureido ring. The polypeptide is ATP-dependent dethiobiotin synthetase BioD (Rhodopseudomonas palustris (strain HaA2)).